The sequence spans 265 residues: 4-hydroxy-2-oxo-heptane-1,7-dioate aldolase (265 aa).

The active-site Proton acceptor is the histidine 45. Residue glutamine 147 coordinates substrate. Glutamate 149 is a binding site for a divalent metal cation. Substrate is bound by residues alanine 174 and aspartate 175. Aspartate 175 is an a divalent metal cation binding site.

The protein belongs to the HpcH/HpaI aldolase family. Homohexamer; trimer of dimers. A divalent metal cation serves as cofactor.

It catalyses the reaction 4-hydroxy-2-oxoheptanedioate = succinate semialdehyde + pyruvate. The protein operates within aromatic compound metabolism; 4-hydroxyphenylacetate degradation; pyruvate and succinate semialdehyde from 4-hydroxyphenylacetate: step 7/7. Functionally, catalyzes the reversible retro-aldol cleavage of 4-hydroxy-2-ketoheptane-1,7-dioate (HKHD) to pyruvate and succinic semialdehyde. The protein is 4-hydroxy-2-oxo-heptane-1,7-dioate aldolase of Klebsiella pneumoniae subsp. pneumoniae (strain ATCC 700721 / MGH 78578).